A 303-amino-acid polypeptide reads, in one-letter code: Ribonuclease Z (303 aa).

Positions 61, 63, 65, 66, 138, 206, and 265 each coordinate Zn(2+). The active-site Proton acceptor is Asp65.

Belongs to the RNase Z family. As to quaternary structure, homodimer. Zn(2+) serves as cofactor.

It carries out the reaction Endonucleolytic cleavage of RNA, removing extra 3' nucleotides from tRNA precursor, generating 3' termini of tRNAs. A 3'-hydroxy group is left at the tRNA terminus and a 5'-phosphoryl group is left at the trailer molecule.. Zinc phosphodiesterase, which displays some tRNA 3'-processing endonuclease activity. Probably involved in tRNA maturation, by removing a 3'-trailer from precursor tRNA. The chain is Ribonuclease Z from Agathobacter rectalis (strain ATCC 33656 / DSM 3377 / JCM 17463 / KCTC 5835 / VPI 0990) (Eubacterium rectale).